A 173-amino-acid polypeptide reads, in one-letter code: NADH-ubiquinone oxidoreductase chain 6 (173 aa).

Transmembrane regions (helical) follow at residues 1 to 21, 27 to 47, 48 to 68, 87 to 107, and 139 to 159; these read MTYF…AVAS, YGVL…LSLG, VSFI…VVFV, VVIY…VGDF, and WGAG…FVVL.

It belongs to the complex I subunit 6 family.

It localises to the mitochondrion membrane. It carries out the reaction a ubiquinone + NADH + 5 H(+)(in) = a ubiquinol + NAD(+) + 4 H(+)(out). In terms of biological role, core subunit of the mitochondrial membrane respiratory chain NADH dehydrogenase (Complex I) that is believed to belong to the minimal assembly required for catalysis. Complex I functions in the transfer of electrons from NADH to the respiratory chain. The immediate electron acceptor for the enzyme is believed to be ubiquinone. In Struthio camelus (Common ostrich), this protein is NADH-ubiquinone oxidoreductase chain 6 (MT-ND6).